The chain runs to 202 residues: Putative 3-methyladenine DNA glycosylase (202 aa).

It belongs to the DNA glycosylase MPG family.

This Staphylococcus aureus (strain Mu3 / ATCC 700698) protein is Putative 3-methyladenine DNA glycosylase.